Reading from the N-terminus, the 145-residue chain is Neutral phospholipase A2 paradoxin-like beta chain (145 aa).

The first 27 residues, 1–27 (MHPAHLLVLLAVCVSLLGASDIPPLPL), serve as a signal peptide directing secretion. 7 cysteine pairs are disulfide-bonded: Cys38–Cys98, Cys54–Cys144, Cys56–Cys72, Cys71–Cys125, Cys78–Cys118, Cys87–Cys111, and Cys105–Cys116.

Belongs to the phospholipase A2 family. Group I subfamily. N49 sub-subfamily. As to quaternary structure, heterotrimer of alpha, beta, and gamma chains; non-covalently linked. As to expression, expressed by the venom gland.

Its subcellular location is the secreted. Its function is as follows. Heterotrimer: Snake venom phospholipase A2 (PLA2) heterotrimer that acts as a potent presynaptic neurotoxin by blocking synaptic transmission and synaptic vesicle recycling. May act by binding in a calcium-dependent fashion to neurotonal pentraxin-1 (NPTX1) and neurotonal pentraxin-2 (NPTX2), but not to neuronal pentraxin receptor (NPTXR). Also binds to taipoxin-associated calcium binding protein 49 (RCN2), a protein localized in the lumen of endoplasmic reticulum. Functionally, monomer (beta chain): Snake venom phospholipase A2 homolog that is neither toxic nor enzymatically active. Does not bind calcium. The protein is Neutral phospholipase A2 paradoxin-like beta chain of Oxyuranus microlepidotus (Inland taipan).